Consider the following 772-residue polypeptide: NAD(P)H-quinone oxidoreductase subunit 5, chloroplastic (772 aa).

16 consecutive transmembrane segments (helical) span residues 9–29 (WIIP…LLLF), 40–60 (WSFP…YLSI), 89–109 (IDPL…LVLF), 125–145 (FAYL…SNLI), 147–167 (IYIF…FWFT), 185–205 (GDFG…SFEF), 220–240 (NQVH…GAVA), 259–279 (TPIS…FLVA), 290–312 (YIMN…LALA), 328–348 (LGYM…FHLI), 355–375 (ALLF…VGYS), 397–417 (TAFL…CFWS), 426–446 (WLYS…TAFY), 550–570 (LFSL…GIPF), 604–624 (FVTN…IATF), and 731–751 (IFIF…FFVL).

The protein belongs to the complex I subunit 5 family. In terms of assembly, NDH is composed of at least 16 different subunits, 5 of which are encoded in the nucleus.

The protein resides in the plastid. It is found in the chloroplast thylakoid membrane. The catalysed reaction is a plastoquinone + NADH + (n+1) H(+)(in) = a plastoquinol + NAD(+) + n H(+)(out). It catalyses the reaction a plastoquinone + NADPH + (n+1) H(+)(in) = a plastoquinol + NADP(+) + n H(+)(out). Its function is as follows. NDH shuttles electrons from NAD(P)H:plastoquinone, via FMN and iron-sulfur (Fe-S) centers, to quinones in the photosynthetic chain and possibly in a chloroplast respiratory chain. The immediate electron acceptor for the enzyme in this species is believed to be plastoquinone. Couples the redox reaction to proton translocation, and thus conserves the redox energy in a proton gradient. The chain is NAD(P)H-quinone oxidoreductase subunit 5, chloroplastic (ndhF) from Oenothera argillicola (Appalachian evening primrose).